The chain runs to 389 residues: Endo-chitosanase C (389 aa).

The signal sequence occupies residues 1 to 22; it reads MPIKSFASRLALSLAICGTAMG. The stretch at 280–313 is one R3-1 repeat; the sequence is CSWPGHCAGFKNKGATCSSNDDCSDDLACQNGKC. One copy of the R3-2 repeat lies at 320-350; it reads ETCSWEGHCKGATCSSNDDCSDELACISGIC. The R3-3 repeat unit spans residues 357–387; that stretch reads ETCEWEGHCEGASCSSHDDCDGNLACKNGKC.

The protein belongs to the glycosyl hydrolase 75 family.

It is found in the secreted. The enzyme catalyses Endohydrolysis of beta-(1-&gt;4)-linkages between D-glucosamine residues in a partly acetylated chitosan.. In terms of biological role, chitosanase catalyzing the endo-type cleavage of chitosan, the deacylated form of chitin. Chitosanase may be crucial in the degradation of the deacetylated portion of chitin in the fungal cell wall. Chitoolisaccharides produced by the hydrolysis of partially N-acetylated chitosan are known to have many biological activities, including antibacterial activity, immune-enhancing effects, and elicitor activity. This is Endo-chitosanase C (csnC) from Aspergillus oryzae (strain ATCC 42149 / RIB 40) (Yellow koji mold).